The primary structure comprises 144 residues: Peptide methionine sulfoxide reductase MsrB (144 aa).

Positions 5–128 constitute a MsrB domain; sequence KEELRQRIGE…NSAALQFIPV (124 aa). Catalysis depends on cysteine 117, which acts as the Nucleophile.

It belongs to the MsrB Met sulfoxide reductase family.

It catalyses the reaction L-methionyl-[protein] + [thioredoxin]-disulfide + H2O = L-methionyl-(R)-S-oxide-[protein] + [thioredoxin]-dithiol. In Ligilactobacillus salivarius (strain UCC118) (Lactobacillus salivarius), this protein is Peptide methionine sulfoxide reductase MsrB.